The sequence spans 216 residues: Endo-1,4-beta-xylanase 2 (216 aa).

A signal peptide spans 1-27 (MVSFSSLFVAACAAVTAFALPNELEKR). The GH11 domain occupies 28-216 (AITSNEQGTN…SSGSASITVS (189 aa)). A glycan (N-linked (GlcNAc...) asparagine) is linked at Asn87. Residue Glu112 is the Nucleophile of the active site. Catalysis depends on Glu203, which acts as the Proton donor.

This sequence belongs to the glycosyl hydrolase 11 (cellulase G) family.

The protein resides in the secreted. The enzyme catalyses Endohydrolysis of (1-&gt;4)-beta-D-xylosidic linkages in xylans.. The protein operates within glycan degradation; xylan degradation. In terms of biological role, endo-1,4-beta-xylanase involved in the hydrolysis of xylan, a major structural heterogeneous polysaccharide found in plant biomass representing the second most abundant polysaccharide in the biosphere, after cellulose. The protein is Endo-1,4-beta-xylanase 2 (xyn2) of Rhizopus oryzae (Mucormycosis agent).